We begin with the raw amino-acid sequence, 254 residues long: Ribonuclease PH (254 aa).

Residues R86 and 124–126 (GTR) each bind phosphate.

Belongs to the RNase PH family. As to quaternary structure, homohexameric ring arranged as a trimer of dimers.

The catalysed reaction is tRNA(n+1) + phosphate = tRNA(n) + a ribonucleoside 5'-diphosphate. Its function is as follows. Phosphorolytic 3'-5' exoribonuclease that plays an important role in tRNA 3'-end maturation. Removes nucleotide residues following the 3'-CCA terminus of tRNAs; can also add nucleotides to the ends of RNA molecules by using nucleoside diphosphates as substrates, but this may not be physiologically important. Probably plays a role in initiation of 16S rRNA degradation (leading to ribosome degradation) during starvation. In Carboxydothermus hydrogenoformans (strain ATCC BAA-161 / DSM 6008 / Z-2901), this protein is Ribonuclease PH.